Reading from the N-terminus, the 567-residue chain is Delta(24)-sterol reductase (567 aa).

The Lumenal segment spans residues 1–24; the sequence is MSDLEAPLRPKRKKIWVDYFVKFR. A helical; Signal-anchor membrane pass occupies residues 25–45; that stretch reads WILVIFVVLPISFTLYFLTYL. The 187-residue stretch at 45-231 folds into the FAD-binding PCMH-type domain; sequence LGDVRSEWKS…VAAEVKLIPI (187 aa). Residues 46–567 are Cytoplasmic-facing; it reads GDVRSEWKSF…AYPEVDQPPD (522 aa). The tract at residues 520–541 is interaction with calmodulin; sequence CRRKYGAVGTFMSVYYKCKKGR. Residues 548–567 form a disordered region; the sequence is REAEQAHLDTAYPEVDQPPD.

Belongs to the DIMINUTO family. Highly expressed in the apical region and root tips and lower levels in immature and mature internodes and leaves.

The protein localises to the membrane. The enzyme catalyses lathosterol + NADP(+) = 5alpha-cholesta-7,24-dien-3beta-ol + NADPH + H(+). Its function is as follows. Plays a critical role in the general process of plant cell elongation. This is Delta(24)-sterol reductase (DIM) from Pisum sativum (Garden pea).